Reading from the N-terminus, the 316-residue chain is MTKRDQSLATPYLQFDRTQWAALRDSVPLTLTEEEIVKLKGINEDLSLDEVAQIYLPLSRLLNFYISSNLRRQAVLEQFLGTDGQRIPYVIGIAGSVAVGKSTTARLLQALLSRWPEHRSVELITTDGFLYPNKVLNERGLMKKKGFPQSYDMHSLVKFVSEVKSGADHVTAPVYSHLIYDIVPDGNKIIKQPDILILEGLNVLQSGMDYPHDPHHVFVSDFVDFSIYVDAPEDLLQSWYINRFLKFRQGAFSNPDSYFHNYAKLPETEAVKIATQLWKEINGLNLKQNILPTRERASLIMTKSANHAVESVRLRK.

ATP is bound at residue 95–102; the sequence is GSVAVGKS.

This sequence belongs to the prokaryotic pantothenate kinase family.

Its subcellular location is the cytoplasm. It catalyses the reaction (R)-pantothenate + ATP = (R)-4'-phosphopantothenate + ADP + H(+). It functions in the pathway cofactor biosynthesis; coenzyme A biosynthesis; CoA from (R)-pantothenate: step 1/5. This chain is Pantothenate kinase, found in Yersinia enterocolitica serotype O:8 / biotype 1B (strain NCTC 13174 / 8081).